The primary structure comprises 382 residues: Protein shisa-9A (382 aa).

Positions 1–26 (MKWTVLLLEYFLVKVLVLLYSADGEA) are cleaved as a signal peptide. Residues 27–132 (QQLEGFIMLS…DPRHDPTKDK (106 aa)) lie on the Extracellular side of the membrane. Residue Asn-39 is glycosylated (N-linked (GlcNAc...) asparagine). The chain crosses the membrane as a helical span at residues 133–153 (TNLIVYIICGVVAIMALVGIF). The Cytoplasmic portion of the chain corresponds to 154-382 (TKLGLEKAHR…VTNSKAEVTV (229 aa)).

Belongs to the shisa family. SHISA9 subfamily. As to quaternary structure, component of some AMPA receptors (ionotropic glutamate receptors) complex.

Its subcellular location is the cell projection. It is found in the dendritic spine membrane. The protein localises to the synapse. Its function is as follows. Regulator of short-term neuronal synaptic plasticity in the dentate gyrus. Associates with AMPA receptors (ionotropic glutamate receptors) in synaptic spines and promotes AMPA receptor desensitization at excitatory synapses. This is Protein shisa-9A (shisa9a) from Danio rerio (Zebrafish).